The primary structure comprises 181 residues: Protein Abitram (181 aa).

Belongs to the ABITRAM family. In terms of assembly, interacts with F-actin. Interacts with G-actin.

Its subcellular location is the nucleus speckle. It localises to the cell projection. It is found in the lamellipodium. The protein localises to the nucleus. The protein resides in the growth cone. Its subcellular location is the dendrite. Functionally, actin-binding protein that regulates actin polymerization, filopodia dynamics and increases the branching of proximal dendrites of developing neurons. The polypeptide is Protein Abitram (Homo sapiens (Human)).